A 105-amino-acid chain; its full sequence is uncharacterized protein (105 aa).

The next 3 membrane-spanning stretches (helical) occupy residues 3–23 (ISPL…QALF), 41–61 (DLVN…ALVS), and 63–83 (AFPV…TFIY).

The protein resides in the cell membrane. This is an uncharacterized protein from Methanocaldococcus jannaschii (strain ATCC 43067 / DSM 2661 / JAL-1 / JCM 10045 / NBRC 100440) (Methanococcus jannaschii).